An 89-amino-acid chain; its full sequence is Putative membrane protein insertion efficiency factor (89 aa).

This sequence belongs to the UPF0161 family.

It localises to the cell membrane. In terms of biological role, could be involved in insertion of integral membrane proteins into the membrane. This is Putative membrane protein insertion efficiency factor from Exiguobacterium sp. (strain ATCC BAA-1283 / AT1b).